Reading from the N-terminus, the 406-residue chain is Cysteine desulfurase (406 aa).

At Lys-226 the chain carries N6-(pyridoxal phosphate)lysine. The active-site Cysteine persulfide intermediate is Cys-364.

This sequence belongs to the class-V pyridoxal-phosphate-dependent aminotransferase family. Csd subfamily. As to quaternary structure, homodimer. Interacts with SufE and the SufBCD complex composed of SufB, SufC and SufD. The interaction with SufE is required to mediate the direct transfer of the sulfur atom from the S-sulfanylcysteine. Requires pyridoxal 5'-phosphate as cofactor.

The protein localises to the cytoplasm. It carries out the reaction (sulfur carrier)-H + L-cysteine = (sulfur carrier)-SH + L-alanine. The catalysed reaction is L-selenocysteine + AH2 = hydrogenselenide + L-alanine + A + H(+). Its pathway is cofactor biosynthesis; iron-sulfur cluster biosynthesis. Functionally, cysteine desulfurases mobilize the sulfur from L-cysteine to yield L-alanine, an essential step in sulfur metabolism for biosynthesis of a variety of sulfur-containing biomolecules. Component of the suf operon, which is activated and required under specific conditions such as oxidative stress and iron limitation. Acts as a potent selenocysteine lyase in vitro, that mobilizes selenium from L-selenocysteine. Selenocysteine lyase activity is however unsure in vivo. In Escherichia coli O8 (strain IAI1), this protein is Cysteine desulfurase.